The chain runs to 405 residues: MKIIAKIPAWMLLCLFILSPTTETIYTSGLPSLTKYFGIDGGITQTTSTLYFLGFALGILTLGRLSDIYGRRPIALLGLFIYVISSIISIFAVNIEMLMIARFVQAFGVSVGSVIGQAMARDSYQGSELSYVYASLSPWLLFIPSLGSSIGGYIIEYSSWHYVFVFFSLTGTILLALYYKVLPETNSYIDFSQSSKYFEVLQVIIKDKILWLYAFIIGAFNGIYYGFFIEAPFIFIDKMKVSSSFYGKLAFLLSFAAIFGGFLGGYLIKKRHVHDKKVMGLGFIFSLCGCILFAVNAFILEVVSASHSLAIAMIFVPMMIHMVGHNLLIPMTLRYALVDYAKVTGTAGSIFGAIYYVVIAAVTYLVSKIHSETISNFALLCFVLSISSAISFYCIWVLYKKKHKL.

The next 12 membrane-spanning stretches (helical) occupy residues 3-23 (IIAK…PTTE), 42-62 (GITQ…ILTL), 73-93 (PIAL…IFAV), 95-115 (IEML…GSVI), 135-155 (SLSP…GYII), 162-182 (YVFV…YKVL), 209-229 (ILWL…GFFI), 248-268 (KLAF…GYLI), 280-300 (GLGF…AFIL), 309-329 (LAIA…NLLI), 346-366 (TAGS…TYLV), and 377-397 (FALL…CIWV).

This sequence belongs to the major facilitator superfamily. Bcr/CmlA family.

Its subcellular location is the cell inner membrane. This is an uncharacterized protein from Rickettsia felis (strain ATCC VR-1525 / URRWXCal2) (Rickettsia azadi).